The sequence spans 177 residues: Large ribosomal subunit protein uL10 (177 aa).

It belongs to the universal ribosomal protein uL10 family. Part of the ribosomal stalk of the 50S ribosomal subunit. The N-terminus interacts with L11 and the large rRNA to form the base of the stalk. The C-terminus forms an elongated spine to which L12 dimers bind in a sequential fashion forming a multimeric L10(L12)X complex.

Forms part of the ribosomal stalk, playing a central role in the interaction of the ribosome with GTP-bound translation factors. This Leptospira biflexa serovar Patoc (strain Patoc 1 / Ames) protein is Large ribosomal subunit protein uL10.